A 338-amino-acid polypeptide reads, in one-letter code: tRNA (cytosine(34)-C(5))-methyltransferase, mitochondrial (338 aa).

S-adenosyl-L-methionine is bound by residues 140–146, Glu-163, Asp-194, and Asp-212; that span reads CAAPGGK. The active-site Nucleophile is Cys-266.

Belongs to the class I-like SAM-binding methyltransferase superfamily. RsmB/NOP family.

It is found in the mitochondrion matrix. It carries out the reaction cytidine(34) in mitochondrial tRNA + S-adenosyl-L-methionine = 5-methylcytidine(34) in mitochondrial tRNA + S-adenosyl-L-homocysteine + H(+). Functionally, mitochondrial tRNA methyltransferase that mediates methylation of cytosine to 5-methylcytosine (m5C) at position 34 of mt-tRNA(Met). mt-tRNA(Met) methylation at cytosine(34) takes place at the wobble position of the anticodon and initiates the formation of 5-formylcytosine (f(5)c) at this position. mt-tRNA(Met) containing the f(5)c modification at the wobble position enables recognition of the AUA codon in addition to the AUG codon, expanding codon recognition in mitochondrial translation. This Bos taurus (Bovine) protein is tRNA (cytosine(34)-C(5))-methyltransferase, mitochondrial.